A 335-amino-acid polypeptide reads, in one-letter code: Tryptophan--tRNA ligase (335 aa).

ATP is bound by residues 13 to 15 (QPS) and 21 to 22 (GN). The short motif at 14-22 (PSGNLTIGN) is the 'HIGH' region element. L-tryptophan is bound at residue D136. ATP contacts are provided by residues 148–150 (GQD), I187, and 196–200 (KMSKS). The 'KMSKS' region signature appears at 196–200 (KMSKS).

This sequence belongs to the class-I aminoacyl-tRNA synthetase family. Homodimer.

The protein resides in the cytoplasm. It catalyses the reaction tRNA(Trp) + L-tryptophan + ATP = L-tryptophyl-tRNA(Trp) + AMP + diphosphate + H(+). Catalyzes the attachment of tryptophan to tRNA(Trp). The sequence is that of Tryptophan--tRNA ligase from Buchnera aphidicola subsp. Acyrthosiphon pisum (strain APS) (Acyrthosiphon pisum symbiotic bacterium).